A 680-amino-acid polypeptide reads, in one-letter code: Tripartite terminase subunit 1 (680 aa).

A C3H1-type zinc finger spans residues Cys180 to His208. ATP is bound at residue Tyr610–Asn617.

This sequence belongs to the herpesviridae TRM1 protein family. In terms of assembly, associates with TRM2 and TRM3 to form the tripartite terminase complex. Interacts with portal protein.

It localises to the host nucleus. Its function is as follows. Component of the molecular motor that translocates viral genomic DNA in empty capsid during DNA packaging. Forms a tripartite terminase complex together with TRM2 and TRM3 in the host cytoplasm. Once the complex reaches the host nucleus, it interacts with the capsid portal vertex. This portal forms a ring in which genomic DNA is translocated into the capsid. TRM1 carries an endonuclease activity that plays an important role for the cleavage of concatemeric viral DNA into unit length genomes. This is Tripartite terminase subunit 1 from Alcelaphine herpesvirus 1 (strain C500) (AlHV-1).